The following is a 76-amino-acid chain: Bowman-Birk type proteinase inhibitor DE-3 (76 aa).

7 cysteine pairs are disulfide-bonded: cysteine 16/cysteine 70, cysteine 17/cysteine 32, cysteine 20/cysteine 66, cysteine 22/cysteine 30, cysteine 40/cysteine 47, cysteine 44/cysteine 59, and cysteine 49/cysteine 57.

It belongs to the Bowman-Birk serine protease inhibitor family.

The protein is Bowman-Birk type proteinase inhibitor DE-3 of Macrotyloma axillare (Perennial horse gram).